Here is a 282-residue protein sequence, read N- to C-terminus: ATP phosphoribosyltransferase (282 aa).

Belongs to the ATP phosphoribosyltransferase family. Long subfamily. The cofactor is Mg(2+).

It localises to the cytoplasm. It catalyses the reaction 1-(5-phospho-beta-D-ribosyl)-ATP + diphosphate = 5-phospho-alpha-D-ribose 1-diphosphate + ATP. It participates in amino-acid biosynthesis; L-histidine biosynthesis; L-histidine from 5-phospho-alpha-D-ribose 1-diphosphate: step 1/9. Feedback inhibited by histidine. In terms of biological role, catalyzes the condensation of ATP and 5-phosphoribose 1-diphosphate to form N'-(5'-phosphoribosyl)-ATP (PR-ATP). Has a crucial role in the pathway because the rate of histidine biosynthesis seems to be controlled primarily by regulation of HisG enzymatic activity. This Pyrobaculum neutrophilum (strain DSM 2338 / JCM 9278 / NBRC 100436 / V24Sta) (Thermoproteus neutrophilus) protein is ATP phosphoribosyltransferase.